Consider the following 154-residue polypeptide: Probable chemoreceptor glutamine deamidase CheD (154 aa).

Belongs to the CheD family.

It catalyses the reaction L-glutaminyl-[protein] + H2O = L-glutamyl-[protein] + NH4(+). Functionally, probably deamidates glutamine residues to glutamate on methyl-accepting chemotaxis receptors (MCPs), playing an important role in chemotaxis. The chain is Probable chemoreceptor glutamine deamidase CheD from Methanococcus maripaludis (strain C5 / ATCC BAA-1333).